Consider the following 205-residue polypeptide: Methylthioribulose-1-phosphate dehydratase (205 aa).

Zn(2+) is bound by residues His-96 and His-98.

This sequence belongs to the aldolase class II family. MtnB subfamily. The cofactor is Zn(2+).

It carries out the reaction 5-(methylsulfanyl)-D-ribulose 1-phosphate = 5-methylsulfanyl-2,3-dioxopentyl phosphate + H2O. It functions in the pathway amino-acid biosynthesis; L-methionine biosynthesis via salvage pathway; L-methionine from S-methyl-5-thio-alpha-D-ribose 1-phosphate: step 2/6. Its function is as follows. Catalyzes the dehydration of methylthioribulose-1-phosphate (MTRu-1-P) into 2,3-diketo-5-methylthiopentyl-1-phosphate (DK-MTP-1-P). The polypeptide is Methylthioribulose-1-phosphate dehydratase (Pseudomonas aeruginosa (strain ATCC 15692 / DSM 22644 / CIP 104116 / JCM 14847 / LMG 12228 / 1C / PRS 101 / PAO1)).